A 498-amino-acid chain; its full sequence is MAISDEPETVATALNHSSLRRRPTAAGLFNSPETTTDSSGDDLAKDSGSDDSISSDAANSQPQQKQDTDFSVLKFAYRPSVPAHRKVKESPLSSDTIFRQSHAGLFNLCIVVLVAVNSRLIIENLMKYGWLIKSGFWFSSKSLRDWPLFMCCLSLVVFPFAAFIVEKLAQQKCIPEPVVVVLHIIITSASLFYPVLVILRCDSAFLSGVTLMLFACVVWLKLVSYAHTNYDMRALTKSVEKGEALPDTLNMDYPYNVSFKSLAYFLVAPTLCYQPSYPRTPYIRKGWLFRQLVKLIIFTGVMGFIIEQYINPIVQNSQHPLKGNLLYAIERVLKLSVPNLYVWLCMFYCFFHLWLNILAELLRFGDREFYQDWWNAKTVEDYWRMWNMPVHKWMIRHLYFPCLRHGIPKAVALLIAFLVSALFHELCIAVPCHIFKLWAFGGIMFQVPLVFITNYLQNKFRNSMVGNMIFWFIFSILGQPMCVLLYYHDLMNRKGKLD.

The segment at 1-67 (MAISDEPETV…ANSQPQQKQD (67 aa)) is disordered. Helical transmembrane passes span 102–122 (HAGL…RLII), 146–166 (WPLF…FIVE), 178–198 (VVVV…VLVI), 203–223 (SAFL…LKLV), 253–273 (YPYN…TLCY), 295–315 (LIIF…PIVQ), and 342–362 (VWLC…AELL). Positions 369–375 (FYQDWWN) match the FYXDWWN motif motif. 3 consecutive transmembrane segments (helical) span residues 410-430 (AVAL…CIAV), 432-452 (CHIF…LVFI), and 465-485 (VGNM…CVLL). Histidine 424 is an active-site residue.

This sequence belongs to the membrane-bound acyltransferase family. Sterol o-acyltransferase subfamily. As to expression, highly expressed in flowers and pods. Expressed at low levels in roots, stems and leaves.

It is found in the endoplasmic reticulum membrane. It catalyses the reaction an acyl-CoA + a 1,2-diacyl-sn-glycerol = a triacyl-sn-glycerol + CoA. It functions in the pathway glycerolipid metabolism; triacylglycerol biosynthesis. Functionally, major contributor to triacylglycerol (TAG) synthesis and oil accumulation in developing seeds. Catalyzes the acylation of the sn-3 hydroxy group of sn-1,2-diacylglycerol using acyl-CoA. Has a marked preference for oleoyl-CoA (18:1) and sn-1,2-dioleoylglycerol over vernoloyl-CoA and sn-1,2-divernoloylglycerol. Can use oleoyl-CoA, linoleoyl-CoA and linolenoyl-CoA as substrates. This is Diacylglycerol O-acyltransferase 1A from Glycine max (Soybean).